We begin with the raw amino-acid sequence, 1225 residues long: Cohesin subunit SA-3 (1225 aa).

The segment at 1-97 (MSSPLQRAVG…HSRKQSEPPA (97 aa)) is disordered. Over residues 15–26 (ALSASSSSSASL) the composition is skewed to low complexity. The span at 45-54 (LADEDTDFED) shows a compositional bias: acidic residues. Composition is skewed to basic residues over residues 59–69 (NVKKRAAKRPP) and 76–90 (KHPK…RHSR). One can recognise an SCD domain in the interval 309–394 (FVHRYRDVLP…SRFKDRMVSM (86 aa)). 3 disordered regions span residues 546-567 (SEGH…KERK), 1063-1113 (AETS…STAV), and 1177-1225 (EEDE…IEDF). Basic and acidic residues predominate over residues 1078–1089 (VEGPAKPNREDV). Positions 1090 to 1099 (SSSQEESLQL) are enriched in low complexity. The span at 1177–1191 (EEDEEEELEIQDESN) shows a compositional bias: acidic residues. Residues 1198–1209 (DMQASSYSSTSE) show a composition bias toward polar residues. Ser-1203 is subject to Phosphoserine. Positions 1216–1225 (DSTELDIEDF) are enriched in acidic residues.

Belongs to the SCC3 family. Component of the meiosis-specific cohesin complex, which also contains the SMC1 (SMC1A or SMC1B) and SMC3 heterodimer. Such complex likely contains RAD21, or the meiosis-specific related protein REC8. Interacts with CCDC79/TERB1; recruiting cohesin to telomeres to develop structural rigidity. Post-translationally, phosphorylated. As to expression, testis specific.

The protein resides in the nucleus. It is found in the chromosome. The protein localises to the centromere. Meiosis specific component of cohesin complex. The cohesin complex is required for the cohesion of sister chromatids after DNA replication. The cohesin complex apparently forms a large proteinaceous ring within which sister chromatids can be trapped. At anaphase, the complex is cleaved and dissociates from chromatin, allowing sister chromatids to segregate. The meiosis-specific cohesin complex probably replaces mitosis specific cohesin complex when it dissociates from chromatin during prophase I. The sequence is that of Cohesin subunit SA-3 (STAG3) from Homo sapiens (Human).